A 346-amino-acid chain; its full sequence is Integrin beta-1-binding protein 2 (346 aa).

Zn(2+) contacts are provided by Cys-5, Cys-10, Cys-24, and His-27. Residues 5–64 (CHNKGCGQHFDPQTNLPDSCCHHPGVPVFHDALKGWSCCRKRTVDFSEFLNIKGCTVGPH) enclose the CHORD 1 domain. The SH3-binding signature appears at 28-31 (PGVP). Residues Cys-42, Cys-43, Cys-59, and His-64 each contribute to the Zn(2+) site. Residues 70–78 (PEAPQPEGP) carry the SH3-binding motif. Residues 70–113 (PEAPQPEGPATSSSLLEQKPPNTIPKSAETLRRERPKSDLPPKL) are disordered. Polar residues predominate over residues 79–94 (ATSSSLLEQKPPNTIP). The span at 98–109 (ETLRRERPKSDL) shows a compositional bias: basic and acidic residues. Residues Cys-150 and Cys-155 each contribute to the Zn(2+) site. The region spanning 150–209 (CQNPGCDAVYQGSESDATPCTYHPGAPRFHEGMKSWSCCGIQTLDFGVFLAQPGCRVGRH) is the CHORD 2 domain. Residues 159-162 (YQGS) carry the SH2-binding motif. Positions 169 and 172 each coordinate Zn(2+). Positions 173 to 176 (PGAP) match the SH3-binding motif. Positions 187, 188, 204, and 209 each coordinate Zn(2+). Residues 216–305 (LASCRHDWHQ…ADPGFWAQLE (90 aa)) enclose the CS domain. Positions 235 to 238 (YGQI) match the SH2-binding motif. The disordered stretch occupies residues 311 to 346 (AEKSKSGVGLEMDEEESEDSDDDLSWTEEEEEAMGE). Over residues 321 to 346 (EMDEEESEDSDDDLSWTEEEEEAMGE) the composition is skewed to acidic residues.

In terms of assembly, interacts with beta-1 integrin subunit. This interaction is regulated by divalent cations, and it occurs only in absence of calcium.

May play a role during maturation and/or organization of muscles cells. The chain is Integrin beta-1-binding protein 2 (ITGB1BP2) from Sus scrofa (Pig).